Reading from the N-terminus, the 308-residue chain is Probable pyridoxal 5'-phosphate synthase subunit pdx-1 (308 aa).

Position 30 (Asp30) interacts with D-ribose 5-phosphate. The Schiff-base intermediate with D-ribose 5-phosphate role is filled by Lys87. Gly159 is a binding site for D-ribose 5-phosphate. A D-glyceraldehyde 3-phosphate-binding site is contributed by Arg171. D-ribose 5-phosphate contacts are provided by residues Gly224 and 245-246 (GS).

This sequence belongs to the PdxS/SNZ family.

It carries out the reaction aldehydo-D-ribose 5-phosphate + D-glyceraldehyde 3-phosphate + L-glutamine = pyridoxal 5'-phosphate + L-glutamate + phosphate + 3 H2O + H(+). The protein operates within cofactor biosynthesis; pyridoxal 5'-phosphate biosynthesis. Catalyzes the formation of pyridoxal 5'-phosphate from ribose 5-phosphate (RBP), glyceraldehyde 3-phosphate (G3P) and ammonia. The ammonia is provided by pdx-2. Can also use ribulose 5-phosphate and dihydroxyacetone phosphate as substrates, resulting from enzyme-catalyzed isomerization of RBP and G3P, respectively. Also plays an indirect role in resistance to singlet oxygen-generating photosensitizers. In Neurospora crassa (strain ATCC 24698 / 74-OR23-1A / CBS 708.71 / DSM 1257 / FGSC 987), this protein is Probable pyridoxal 5'-phosphate synthase subunit pdx-1 (pdx-1).